The following is a 59-amino-acid chain: Large ribosomal subunit protein uL30 (59 aa).

It belongs to the universal ribosomal protein uL30 family. In terms of assembly, part of the 50S ribosomal subunit.

The polypeptide is Large ribosomal subunit protein uL30 (Yersinia pseudotuberculosis serotype I (strain IP32953)).